Here is an 860-residue protein sequence, read N- to C-terminus: Leucine--tRNA ligase (860 aa).

Residues Pro42–His52 carry the 'HIGH' region motif. Residues Lys619 to Ser623 carry the 'KMSKS' region motif. Lys622 is an ATP binding site.

It belongs to the class-I aminoacyl-tRNA synthetase family.

The protein resides in the cytoplasm. The enzyme catalyses tRNA(Leu) + L-leucine + ATP = L-leucyl-tRNA(Leu) + AMP + diphosphate. This chain is Leucine--tRNA ligase, found in Salmonella paratyphi A (strain ATCC 9150 / SARB42).